The following is a 271-amino-acid chain: Protein FAM110D (271 aa).

Positions 1-13 (MLLSSPTTPSRGR) are enriched in polar residues. Disordered stretches follow at residues 1-84 (MLLS…PDSL), 118-149 (DAAP…TGKR), and 186-242 (PQSW…GRPT).

Belongs to the FAM110 family.

The polypeptide is Protein FAM110D (Mus musculus (Mouse)).